The chain runs to 211 residues: Mitotic spindle assembly checkpoint protein MAD2B (211 aa).

In terms of domain architecture, HORMA spans Gln13–Val203. A mediates interaction with REV1 and REV3L and homodimerization region spans residues Glu21–Ala155.

Homooligomer. Heterodimer with REV3L. This dimer forms the minimal DNA polymerase zeta complex (Pol-zeta2), with REV3L bearing DNA polymerase catalytic activity, although its activity is very low in this context. Component of the tetrameric Pol-zeta complex (Pol-zeta4), which consists of REV3L, MAD2L2, POLD2 and POLD3; Pol-zeta4 is the fully active form of DNA polymerase zeta. Component of the shieldin complex, consisting of SHLD1, SHLD2, SHLD3 and MAD2L2/REV7. Within the complex, SHLD2 forms a scaffold which interacts with a SHLD3-MAD2L2 subcomplex via its N-terminus, and with SHLD1 via its C-terminus. Interacts with REV1. Interacts with ADAM9. Interacts with CHAMP1. Interacts with FZR1 (in complex with the anaphase promoting complex APC). May interact with CDC20. Interacts with RAN. Interacts with ELK1; the interaction is direct and recruits MAD2L2 to ELK1-specific promoters. May interact with the JNK kinases MAPK8 and/or MAPK9 to stimulate ELK1 phosphorylation and transcriptional activity upon DNA damage. Interacts with TCF7L2; prevents its binding to promoters and negatively modulates its transcriptional activity. Interacts with YY1AP1. Interacts with PRCC; the interaction is direct. Interacts with POGZ. Interacts with ASTE1.

The protein localises to the nucleus. It localises to the cytoplasm. The protein resides in the cytoskeleton. Its subcellular location is the spindle. In terms of biological role, adapter protein able to interact with different proteins and involved in different biological processes. Mediates the interaction between the error-prone DNA polymerase zeta catalytic subunit REV3L and the inserter polymerase REV1, thereby mediating the second polymerase switching in translesion DNA synthesis. Translesion DNA synthesis releases the replication blockade of replicative polymerases, stalled in presence of DNA lesions. Component of the shieldin complex, which plays an important role in repair of DNA double-stranded breaks (DSBs). During G1 and S phase of the cell cycle, the complex functions downstream of TP53BP1 to promote non-homologous end joining (NHEJ) and suppress DNA end resection. Mediates various NHEJ-dependent processes including immunoglobulin class-switch recombination, and fusion of unprotected telomeres. May also regulate another aspect of cellular response to DNA damage through regulation of the JNK-mediated phosphorylation and activation of the transcriptional activator ELK1. Inhibits the FZR1- and probably CDC20-mediated activation of the anaphase promoting complex APC thereby regulating progression through the cell cycle. Regulates TCF7L2-mediated gene transcription and may play a role in epithelial-mesenchymal transdifferentiation. The sequence is that of Mitotic spindle assembly checkpoint protein MAD2B (MAD2L2) from Bos taurus (Bovine).